A 513-amino-acid chain; its full sequence is ATP synthase subunit alpha 2 (513 aa).

Position 152-159 (152-159) interacts with ATP; the sequence is GDSKTGKT.

The protein belongs to the ATPase alpha/beta chains family. In terms of assembly, F-type ATPases have 2 components, CF(1) - the catalytic core - and CF(0) - the membrane proton channel. CF(1) has five subunits: alpha(3), beta(3), gamma(1), delta(1), epsilon(1). CF(0) has three main subunits: a(1), b(2) and c(9-12). The alpha and beta chains form an alternating ring which encloses part of the gamma chain. CF(1) is attached to CF(0) by a central stalk formed by the gamma and epsilon chains, while a peripheral stalk is formed by the delta and b chains.

It localises to the cell membrane. The catalysed reaction is ATP + H2O + 4 H(+)(in) = ADP + phosphate + 5 H(+)(out). Produces ATP from ADP in the presence of a proton gradient across the membrane. The alpha chain is a regulatory subunit. This chain is ATP synthase subunit alpha 2, found in Mycoplasmopsis pulmonis (strain UAB CTIP) (Mycoplasma pulmonis).